The chain runs to 596 residues: F-box/WD repeat-containing protein 8 (596 aa).

The residue at position 1 (Met1) is an N-acetylmethionine. The tract at residues 21–95 (QVLRRRRRLE…PDRDAAEPEP (75 aa)) is disordered. Residues 29–43 (LEAGERRPRRPEAGA) are compositionally biased toward basic and acidic residues. Residues 44–64 (RGEPASGYLGLAQGLLEGAGR) are compositionally biased toward low complexity. A compositionally biased stretch (basic and acidic residues) spans 71-91 (GRTDRKDVSSRSRSPPDRDAA). Phosphoserine occurs at positions 82 and 84. One can recognise an F-box domain in the interval 111-157 (PFFDVHLPYELAINIFQYLNRRELGLCAQVSKTWKVIAEDEVLWYRL). WD repeat units lie at residues 199–248 (AVSE…LESE), 257–297 (QPYV…FEHD), 298–338 (ARIQ…SEFE), 339–381 (VQKL…LHYV), 382–427 (YGQP…SKLG), 428–473 (NALG…SAHQ), 474–511 (LGVS…EVHS), and 512–559 (RHPV…AYEF).

In terms of assembly, component of the Cul7-RING(FBXW8) complex consisting of CUL7, RBX1, SKP1 and FBXW8; within the complex interacts with CUL7 and SKP1. Interacts with GLMN isoform 1. Interacts with OBSL1, CUL1, CUL2, CCT6B, PFDN5, CCT2, CCT3, CCT6A, CCT7, VBP1, CCDC8, ARF1, TRIP13, PDCD5 and GORASP1. Interacts with MAP4K1/HPK1 (when autophosphorylated). Associated component of the 3M complex. Interacts with POUF51 (when phosphorylated on 'Ser-347'). In terms of processing, phosphorylation at Ser-84 by mTORC2 promotes FBXW8 stabilization, allowing its translocation to the cytosol in response to insulin. In terms of tissue distribution, expressed in placenta and embryonic brain (at protein level).

It localises to the cytoplasm. It is found in the perinuclear region. Its subcellular location is the golgi apparatus. The protein localises to the cytosol. It participates in protein modification; protein ubiquitination. Functionally, substrate-recognition component of the Cul7-RING(FBXW8) ubiquitin ligase complex, which mediates the ubiquitination and subsequent proteasomal degradation of target proteins. The Cul7-RING(FBXW8) complex mediates ubiquitination and consequent degradation of GORASP1, acting as a component of the ubiquitin ligase pathway that regulates Golgi morphogenesis and dendrite patterning in brain. Mediates ubiquitination and degradation of IRS1 in a mTOR-dependent manner: the Cul7-RING(FBXW8) complex recognizes and binds IRS1 previously phosphorylated by S6 kinase (RPS6KB1 or RPS6KB2). The Cul7-RING(FBXW8) complex also mediates ubiquitination of MAP4K1/HPK1: recognizes and binds autophosphorylated MAP4K1/HPK1, leading to its degradation, thereby affecting cell proliferation and differentiation. The Cul7-RING(FBXW8) complex also mediates ubiquitination of phosphorylated cyclin-D1 (CCND1). The Cul7-RING(FBXW8) complex is however not a major regulator of CCND1 stability during the G1/S transition. Associated component of the 3M complex, suggesting that it mediates some of 3M complex functions. This chain is F-box/WD repeat-containing protein 8 (Fbxw8), found in Rattus norvegicus (Rat).